A 103-amino-acid polypeptide reads, in one-letter code: Cell division topological specificity factor (103 aa).

The protein belongs to the MinE family.

Functionally, prevents the cell division inhibition by proteins MinC and MinD at internal division sites while permitting inhibition at polar sites. This ensures cell division at the proper site by restricting the formation of a division septum at the midpoint of the long axis of the cell. This chain is Cell division topological specificity factor, found in Prochlorococcus marinus (strain MIT 9211).